A 181-amino-acid chain; its full sequence is uncharacterized protein (181 aa).

This sequence to M.pneumoniae MPN_635 C-terminal region.

This is an uncharacterized protein from Mycoplasma pneumoniae (strain ATCC 29342 / M129 / Subtype 1) (Mycoplasmoides pneumoniae).